A 414-amino-acid polypeptide reads, in one-letter code: Phosphoglycerate kinase (414 aa).

Substrate-binding positions include 19-21, Arg34, 57-60, Arg114, and Arg154; these read DLN and HQSK. Residues Glu332 and 358 to 361 contribute to the ATP site; that span reads GGHS.

It belongs to the phosphoglycerate kinase family. As to quaternary structure, monomer.

The protein localises to the cytoplasm. The enzyme catalyses (2R)-3-phosphoglycerate + ATP = (2R)-3-phospho-glyceroyl phosphate + ADP. It functions in the pathway carbohydrate degradation; glycolysis; pyruvate from D-glyceraldehyde 3-phosphate: step 2/5. The protein is Phosphoglycerate kinase of Thermococcus onnurineus (strain NA1).